A 139-amino-acid polypeptide reads, in one-letter code: NADPH-dependent 7-cyano-7-deazaguanine reductase (139 aa).

Residue cysteine 34 is the Thioimide intermediate of the active site. Residue aspartate 41 is the Proton donor of the active site. Residues 56-58 and 75-76 each bind substrate; these read VEL and HE.

It belongs to the GTP cyclohydrolase I family. QueF type 1 subfamily.

The protein localises to the cytoplasm. The enzyme catalyses 7-aminomethyl-7-carbaguanine + 2 NADP(+) = 7-cyano-7-deazaguanine + 2 NADPH + 3 H(+). Its pathway is tRNA modification; tRNA-queuosine biosynthesis. Catalyzes the NADPH-dependent reduction of 7-cyano-7-deazaguanine (preQ0) to 7-aminomethyl-7-deazaguanine (preQ1). The chain is NADPH-dependent 7-cyano-7-deazaguanine reductase from Thiobacillus denitrificans (strain ATCC 25259 / T1).